A 188-amino-acid chain; its full sequence is Pyridoxal 5'-phosphate synthase subunit PdxT (188 aa).

47-49 (GES) is an L-glutamine binding site. Cysteine 79 (nucleophile) is an active-site residue. L-glutamine is bound by residues arginine 106 and 134–135 (IR). Residues histidine 169 and glutamate 171 each act as charge relay system in the active site.

This sequence belongs to the glutaminase PdxT/SNO family. In terms of assembly, in the presence of PdxS, forms a dodecamer of heterodimers. Only shows activity in the heterodimer.

It carries out the reaction aldehydo-D-ribose 5-phosphate + D-glyceraldehyde 3-phosphate + L-glutamine = pyridoxal 5'-phosphate + L-glutamate + phosphate + 3 H2O + H(+). The catalysed reaction is L-glutamine + H2O = L-glutamate + NH4(+). It participates in cofactor biosynthesis; pyridoxal 5'-phosphate biosynthesis. Catalyzes the hydrolysis of glutamine to glutamate and ammonia as part of the biosynthesis of pyridoxal 5'-phosphate. The resulting ammonia molecule is channeled to the active site of PdxS. This chain is Pyridoxal 5'-phosphate synthase subunit PdxT, found in Caldicellulosiruptor bescii (strain ATCC BAA-1888 / DSM 6725 / KCTC 15123 / Z-1320) (Anaerocellum thermophilum).